The chain runs to 535 residues: Probable cytochrome P450 12b2, mitochondrial (535 aa).

Cys479 is a binding site for heme.

The protein belongs to the cytochrome P450 family. Heme serves as cofactor.

It is found in the mitochondrion membrane. This is Probable cytochrome P450 12b2, mitochondrial (Cyp12b2) from Drosophila melanogaster (Fruit fly).